We begin with the raw amino-acid sequence, 420 residues long: Vasopressin V1a receptor (420 aa).

The interval 1-20 is disordered; the sequence is MSFPRGSYDPAASNSSPWWP. The Extracellular segment spans residues 1 to 54; it reads MSFPRGSYDPAASNSSPWWPLSAEDANSSWEAAGHQKGSDPSGDVRNEELAKLE. Asn-27 carries N-linked (GlcNAc...) asparagine glycosylation. A helical transmembrane segment spans residues 55–75; sequence IAVLAVIFVVAVLGNSSVLLA. Over 76–92 the chain is Cytoplasmic; it reads LHRTPRKTSRMHLFIRH. A helical membrane pass occupies residues 93-113; that stretch reads LSLADLAVAFFQVLPQLCWDI. Residues 114 to 125 lie on the Extracellular side of the membrane; sequence TYRFRGPDWLCR. Residues Cys-124 and Cys-205 are joined by a disulfide bond. The helical transmembrane segment at 126–146 threads the bilayer; it reads VVKHLQVFAMFASAYMLVVMT. Topologically, residues 147–168 are cytoplasmic; that stretch reads ADRYIAVCHPLKTLQQPTRRSR. Residues 169–189 form a helical membrane-spanning segment; sequence LMIAASWVLSFLLSTPQYFIF. The Extracellular portion of the chain corresponds to 190–225; sequence SMIEIEVNNGTKTQDCWATFIQPWGTRAYVTWMTSG. Residue Asn-198 is glycosylated (N-linked (GlcNAc...) asparagine). Residues 226–246 form a helical membrane-spanning segment; that stretch reads VFVVPVVILGTCYGFICYHIW. Residues 247-294 are Cytoplasmic-facing; it reads RNVRGKTASRQSKGSGEDVAPFHKGLLVTPCVSSVKTISRAKIRTVKM. Residues 295-315 form a helical membrane-spanning segment; sequence TFVIVTAYILCWAPFFIVQMW. Residues 316–331 lie on the Extracellular side of the membrane; the sequence is SVWDDNFIWTDSENPS. A helical transmembrane segment spans residues 332–352; the sequence is ITITALLASLNSCCNPWIYMF. The Cytoplasmic portion of the chain corresponds to 353–420; sequence FSGHLLQDCV…RSIRFIPVST (68 aa). Residues Cys-367 and Cys-368 are each lipidated (S-palmitoyl cysteine). Residues 379–411 form a disordered region; it reads DSDNMSRRHTSYSNNRSPTNSTGTWKDSPKSSR. Residues 389-403 are compositionally biased toward polar residues; that stretch reads SYSNNRSPTNSTGTW. Residue Ser-406 is modified to Phosphoserine.

The protein belongs to the G-protein coupled receptor 1 family. Vasopressin/oxytocin receptor subfamily.

The protein localises to the cell membrane. In terms of biological role, receptor for arginine vasopressin. The activity of this receptor is mediated by G proteins which activate a phosphatidyl-inositol-calcium second messenger system. Involved in social memory formation. This chain is Vasopressin V1a receptor (Avpr1a), found in Microtus ochrogaster (Prairie vole).